We begin with the raw amino-acid sequence, 430 residues long: Putative chloroquine resistance transporter (430 aa).

The segment at 1–22 (MLKEGSSLDLSASSSSGTLRSD) is disordered. Topologically, residues 1-53 (MLKEGSSLDLSASSSSGTLRSDNSFGNSPLDRITSLLILIYKSIRACFKWIYS) are cytoplasmic. Over residues 7-21 (SLDLSASSSSGTLRS) the composition is skewed to low complexity. The chain crosses the membrane as a helical span at residues 54-74 (KSFGIICILFVILDVLTTVFF). Residues 75 to 88 (KRFIDHTKNYVMFT) lie on the Vacuolar side of the membrane. Residues 89–109 (IQVIIFTFWIIVCCIAILCFL) traverse the membrane as a helical segment. The Cytoplasmic portion of the chain corresponds to 110–122 (FNREYMKRHFNVR). The helical transmembrane segment at 123–143 (PLVFLGFLDMLSTGLSANGSA) threads the bilayer. Over 144–147 (HTSG) the chain is Vacuolar. Residues 148 to 168 (LMLVLLGQISVPLTMVSCKLI) traverse the membrane as a helical segment. The Cytoplasmic portion of the chain corresponds to 169–173 (LSKKY). The chain crosses the membrane as a helical span at residues 174-194 (HHYQYISSAIILTFAVLKPIL). Asn-195 carries N-linked (GlcNAc...) asparagine glycosylation. Topologically, residues 195–206 (NRTDTTDNRFYN) are vacuolar. A helical transmembrane segment spans residues 207–223 (NMLYLLASVPDSIASAL). Over 224-239 (REKQYTSKFFHVVKYQ) the chain is Cytoplasmic. A helical transmembrane segment spans residues 240–260 (FFGFLFHFFYNILYTLLFTLP). Residues 261–306 (FNSVKGYFDSLYKLCVNGYKCIFFGVNTITENCGPTLIPTCDNCLE) lie on the Vacuolar side of the membrane. Disulfide bonds link Cys-281–Cys-304 and Cys-293–Cys-301. The helical transmembrane segment at 307–329 (AFKIYCLYILFSSAIRVAYVFIM) threads the bilayer. Over 330-335 (LDGSVT) the chain is Cytoplasmic. Residues 336 to 358 (FTLLLGTVKVPLTSIAFSLRFIA) form a helical membrane-spanning segment. Topologically, residues 359–364 (GDSTTS) are vacuolar. Residues 365–385 (FNLLDVVCFLGIVAGLLLYAL) traverse the membrane as a helical segment. Over 386–430 (GSKKIQEETDLLESPLIDDAESEHELLSTGTEKLMRSEICHDLFT) the chain is Cytoplasmic.

It belongs to the CRT-like transporter family.

The protein resides in the vacuole membrane. Functionally, nutrient transporter. Involved in maintaining the osmotic homeostasis of the digestive vacuole. The polypeptide is Putative chloroquine resistance transporter (Theileria annulata).